Consider the following 97-residue polypeptide: DNA/RNA-binding protein Alba 1 (97 aa).

Serine 2 is subject to N-acetylserine; by ard1 acetylase. Residues lysine 16, lysine 17, and tyrosine 22 each coordinate RNA. Lysine 16 is subject to N6,N6,N6-trimethyllysine; alternate. Lysine 16 bears the N6,N6-dimethyllysine; alternate mark. Position 16 is an N6-acetyllysine; alternate (lysine 16). Residue lysine 16 is modified to N6-methyllysine; alternate. The residue at position 31 (asparagine 31) is a Deamidated asparagine; partial. Glutamine 32 carries the deamidated glutamine; partial modification. Position 40 is an N6-methyllysine; partial (lysine 40). RNA is bound by residues arginine 42 and arginine 44. Lysine 48 carries the post-translational modification N6-acetyllysine; partial. The residue at position 51 (aspartate 51) is an Aspartate methyl ester; partial. At asparagine 58 the chain carries Deamidated asparagine; partial. Position 64 is an N6-acetyllysine; alternate; partial (lysine 64). Residue lysine 64 is modified to N6-methyllysine; alternate; partial. Lysine 68 carries the N6-acetyllysine; partial modification. Glutamine 75 bears the N5-methylglutamine; partial mark. Residue aspartate 81 is modified to Aspartate methyl ester; partial. Lysine 97 is subject to N6-methyllysine; partial.

It belongs to the histone-like Alba family. As to quaternary structure, forms homodimers and higher order oligomers, e.g. homotetramers. In terms of processing, acetylated. Acetylation at Lys-16 by the Pat acetylase decreases DNA-binding affinity. Deacetylation at Lys-16 by the CobB deacetylase increases DNA-binding affinity. Acetylation at Ser-2 is involved in the regulation of the turnover of the protein.

It is found in the cytoplasm. It localises to the chromosome. Binds double-stranded DNA tightly but without sequence specificity. Involved in DNA compaction. Possesses DNA endonuclease activity. Prevents transcription after DNA binding. Binds single-stranded DNA and RNA in vitro. Binds rRNA and mRNA in vivo. May play a role in maintaining the structural and functional stability of RNA, and, perhaps, ribosomes. Binds double-stranded RNA (dsRNA) and exhibits RNA chaperone activity. Required for normal growth. This Saccharolobus islandicus (strain REY15A) (Sulfolobus islandicus) protein is DNA/RNA-binding protein Alba 1.